Reading from the N-terminus, the 698-residue chain is Glycine--tRNA ligase beta subunit (698 aa).

Belongs to the class-II aminoacyl-tRNA synthetase family. In terms of assembly, tetramer of two alpha and two beta subunits.

It localises to the cytoplasm. It carries out the reaction tRNA(Gly) + glycine + ATP = glycyl-tRNA(Gly) + AMP + diphosphate. This is Glycine--tRNA ligase beta subunit from Xanthomonas campestris pv. campestris (strain B100).